Reading from the N-terminus, the 393-residue chain is Major outer membrane porin, serovar E (393 aa).

The first 22 residues, 1-22, serve as a signal peptide directing secretion; that stretch reads MKKLLKSVLVFAALSSASSLQA.

The protein belongs to the chlamydial porin (CP) (TC 1.B.2) family. As to quaternary structure, part of a disulfide cross-linked outer membrane complex (COMC) composed of the major outer membrane porin (MOMP), the small cysteine-rich protein (OmcA) and the large cysteine-rich periplasmic protein (OmcB).

The protein localises to the cell outer membrane. Its function is as follows. In elementary bodies (EBs, the infectious stage, which is able to survive outside the host cell) provides the structural integrity of the outer envelope through disulfide cross-links with the small cysteine-rich protein and the large cysteine-rich periplasmic protein. It has been described in publications as the Sarkosyl-insoluble COMC (Chlamydia outer membrane complex), and serves as the functional equivalent of peptidoglycan. Permits diffusion of specific solutes through the outer membrane. The polypeptide is Major outer membrane porin, serovar E (ompA) (Chlamydia trachomatis).